The primary structure comprises 250 residues: Pyridoxine 5'-phosphate synthase (250 aa).

Asparagine 11 is a binding site for 3-amino-2-oxopropyl phosphate. 13–14 (DH) contributes to the 1-deoxy-D-xylulose 5-phosphate binding site. A 3-amino-2-oxopropyl phosphate-binding site is contributed by arginine 22. Histidine 47 acts as the Proton acceptor in catalysis. 1-deoxy-D-xylulose 5-phosphate-binding residues include arginine 49 and histidine 54. Glutamate 74 acts as the Proton acceptor in catalysis. Threonine 104 contacts 1-deoxy-D-xylulose 5-phosphate. The active-site Proton donor is the histidine 198. Residues glycine 199 and 220-221 (GY) contribute to the 3-amino-2-oxopropyl phosphate site.

The protein belongs to the PNP synthase family. As to quaternary structure, homooctamer; tetramer of dimers.

The protein localises to the cytoplasm. It catalyses the reaction 3-amino-2-oxopropyl phosphate + 1-deoxy-D-xylulose 5-phosphate = pyridoxine 5'-phosphate + phosphate + 2 H2O + H(+). It participates in cofactor biosynthesis; pyridoxine 5'-phosphate biosynthesis; pyridoxine 5'-phosphate from D-erythrose 4-phosphate: step 5/5. Its function is as follows. Catalyzes the complicated ring closure reaction between the two acyclic compounds 1-deoxy-D-xylulose-5-phosphate (DXP) and 3-amino-2-oxopropyl phosphate (1-amino-acetone-3-phosphate or AAP) to form pyridoxine 5'-phosphate (PNP) and inorganic phosphate. This Bradyrhizobium diazoefficiens (strain JCM 10833 / BCRC 13528 / IAM 13628 / NBRC 14792 / USDA 110) protein is Pyridoxine 5'-phosphate synthase.